Consider the following 115-residue polypeptide: Peptidyl-tRNA hydrolase (115 aa).

This sequence belongs to the PTH2 family.

It localises to the cytoplasm. The enzyme catalyses an N-acyl-L-alpha-aminoacyl-tRNA + H2O = an N-acyl-L-amino acid + a tRNA + H(+). Its function is as follows. The natural substrate for this enzyme may be peptidyl-tRNAs which drop off the ribosome during protein synthesis. The protein is Peptidyl-tRNA hydrolase of Methanosarcina acetivorans (strain ATCC 35395 / DSM 2834 / JCM 12185 / C2A).